The primary structure comprises 448 residues: Acetate kinase (448 aa).

N7 is a Mg(2+) binding site. Residue K14 participates in ATP binding. R91 is a binding site for substrate. Residue D148 is the Proton donor/acceptor of the active site. Residues 208–212 (HIGNG) and 283–285 (DRR) contribute to the ATP site. A Mg(2+)-binding site is contributed by E388.

This sequence belongs to the acetokinase family. Homodimer. Requires Mg(2+) as cofactor. It depends on Mn(2+) as a cofactor.

The protein localises to the cytoplasm. The catalysed reaction is acetate + ATP = acetyl phosphate + ADP. It participates in metabolic intermediate biosynthesis; acetyl-CoA biosynthesis; acetyl-CoA from acetate: step 1/2. Functionally, catalyzes the formation of acetyl phosphate from acetate and ATP. Can also catalyze the reverse reaction. In Treponema pallidum (strain Nichols), this protein is Acetate kinase.